Here is a 341-residue protein sequence, read N- to C-terminus: Phenazine O-methyltransferase PhzM (341 aa).

S-adenosyl-L-methionine is bound by residues Asp-205 and 231–233; that span reads GDF. Catalysis depends on His-251, which acts as the Proton acceptor.

It belongs to the class I-like SAM-binding methyltransferase superfamily. Cation-independent O-methyltransferase family. As to quaternary structure, homodimer.

It carries out the reaction 1,6-dihydroxyphenazine + S-adenosyl-L-methionine = 1-hydroxy-6-methoxyphenazine + S-adenosyl-L-homocysteine + H(+). The catalysed reaction is 1-hydroxy-6-methoxyphenazine + S-adenosyl-L-methionine = 1,6-dimethoxyphenazine + S-adenosyl-L-homocysteine + H(+). The enzyme catalyses 1-hydroxy-6-methoxyphenazine N(10)-oxide + S-adenosyl-L-methionine = 1,6-dimethoxyphenazine N(5)-oxide + S-adenosyl-L-homocysteine. It catalyses the reaction 1,6-dihydroxyphenazine N(5),N(10)-dioxide + S-adenosyl-L-methionine = 1-hydroxy-6-methoxyphenazine N(5),N(10)-dioxide + S-adenosyl-L-homocysteine. It carries out the reaction 1-hydroxy-6-methoxyphenazine N(5),N(10)-dioxide + S-adenosyl-L-methionine = 1,6-dimethoxyphenazine N(5),N(10)-dioxide + S-adenosyl-L-homocysteine. Involved in the biosynthesis of phenazine natural products including myxin, an N(5),N(10)-dioxide phenazine antiobiotic, which has antimicrobial activity. O-methyltransferase, which converts iodinin (1,6-dihydroxyphenazine N(5),N(10)-dioxide) to myxin (1-hydroxy-6-methoxyphenazine N(5),N(10)-dioxide). Catalyzes both monomethoxy and dimethoxy formation of phenazine natural compounds. Acts on a wide variety of substrates, catalyzing O-methylation of phenazines with non-, mono- or di-N-oxide. Highest activity with 1,6-dihydroxyphenazine (DHP) as substrate. Less active with monohydroxy-containing and monohydroxy-monomethoxy-containing phenazines. Least active with non-phenazine substrates, such as 8-hydroxyquinoline and 6-hydroxyquinoline. Is not able to convert 1-hydroxyphenazine to 1-hydroxy-N5-methylphenazine (pyocyanine), hence does not function as an N-methyltransferase. The protein is Phenazine O-methyltransferase PhzM of Lysobacter antibioticus.